The chain runs to 411 residues: O-glucosyltransferase rumi (411 aa).

A signal peptide spans 1–20; it reads MLINHLIVVLLISLVGTGGA. Cystine bridges form between Cys64-Cys75, Cys73-Cys378, Cys120-Cys126, and Cys282-Cys305. The active-site Proton donor/acceptor is Asp151. An interaction with the consensus sequence C-X-S-X-[PA]-C in peptide substrates region spans residues 192–197; that stretch reads ATKLHP. UDP-alpha-D-glucose-binding positions include 229 to 233, Arg237, 276 to 278, and 294 to 298; these read RGSRT, VSF, and AASFR. A Prevents secretion from ER motif is present at residues 408–411; that stretch reads KDEL.

It belongs to the glycosyltransferase 90 family.

The protein resides in the endoplasmic reticulum lumen. It participates in protein modification; protein glycosylation. Functionally, protein O-glucosyltransferase. Catalyzes the reaction that attaches glucose through an O-glycosidic linkage to a conserved serine residue found in the consensus sequence C-X-S-X-[PA]-C in epidermal growth factor-like repeats. Regulates Notch signaling by glucosylating Notch in the ER, glucosylation is required for the correct folding and cleavage of Notch. The chain is O-glucosyltransferase rumi from Drosophila melanogaster (Fruit fly).